Reading from the N-terminus, the 809-residue chain is Acyl-homoserine lactone acylase QuiP (809 aa).

The signal sequence occupies residues 1–26 (MASPAFSHFLPRFGVAAAVASALSLA). Residue serine 261 is the Nucleophile of the active site.

The protein belongs to the peptidase S45 family. As to quaternary structure, heterodimer of an alpha subunit and a beta subunit processed from the same precursor.

Its subcellular location is the periplasm. It catalyses the reaction an N-acyl-L-homoserine lactone + H2O = L-homoserine lactone + a carboxylate. Its function is as follows. Catalyzes the deacylation of acyl-homoserine lactone (AHL or acyl-HSL), releasing homoserine lactone (HSL) and the corresponding fatty acid. Possesses a specificity for the degradation of long-chain acyl-HSLs (side chains of seven or more carbons in length). This chain is Acyl-homoserine lactone acylase QuiP (quiP), found in Pseudomonas fluorescens (strain ATCC BAA-477 / NRRL B-23932 / Pf-5).